A 224-amino-acid chain; its full sequence is Ribose-5-phosphate isomerase A (224 aa).

Residues 33 to 36, 86 to 89, and 99 to 102 contribute to the substrate site; these read TGST, DGAD, and KGGG. Catalysis depends on Glu-108, which acts as the Proton acceptor. Lys-126 provides a ligand contact to substrate.

It belongs to the ribose 5-phosphate isomerase family. Homodimer.

It carries out the reaction aldehydo-D-ribose 5-phosphate = D-ribulose 5-phosphate. The protein operates within carbohydrate degradation; pentose phosphate pathway; D-ribose 5-phosphate from D-ribulose 5-phosphate (non-oxidative stage): step 1/1. In terms of biological role, catalyzes the reversible conversion of ribose-5-phosphate to ribulose 5-phosphate. In Bordetella avium (strain 197N), this protein is Ribose-5-phosphate isomerase A.